The following is a 106-amino-acid chain: Large ribosomal subunit protein eL42 (106 aa).

The protein belongs to the eukaryotic ribosomal protein eL42 family.

The polypeptide is Large ribosomal subunit protein eL42 (RPL44) (Meyerozyma guilliermondii (strain ATCC 6260 / CBS 566 / DSM 6381 / JCM 1539 / NBRC 10279 / NRRL Y-324) (Yeast)).